The chain runs to 102 residues: Small ribosomal subunit protein uS10 (102 aa).

It belongs to the universal ribosomal protein uS10 family. As to quaternary structure, part of the 30S ribosomal subunit.

Its function is as follows. Involved in the binding of tRNA to the ribosomes. This is Small ribosomal subunit protein uS10 from Acidothermus cellulolyticus (strain ATCC 43068 / DSM 8971 / 11B).